Reading from the N-terminus, the 257-residue chain is Ribonuclease PH (257 aa).

Phosphate-binding positions include Arg88 and 126 to 128 (GTR).

It belongs to the RNase PH family. In terms of assembly, homohexameric ring arranged as a trimer of dimers.

The catalysed reaction is tRNA(n+1) + phosphate = tRNA(n) + a ribonucleoside 5'-diphosphate. In terms of biological role, phosphorolytic 3'-5' exoribonuclease that plays an important role in tRNA 3'-end maturation. Removes nucleotide residues following the 3'-CCA terminus of tRNAs; can also add nucleotides to the ends of RNA molecules by using nucleoside diphosphates as substrates, but this may not be physiologically important. Probably plays a role in initiation of 16S rRNA degradation (leading to ribosome degradation) during starvation. This is Ribonuclease PH from Nocardia farcinica (strain IFM 10152).